The following is a 152-amino-acid chain: UPF0266 membrane protein YobD (152 aa).

Transmembrane regions (helical) follow at residues 6 to 26 (LVLI…QFIM), 45 to 65 (IDSV…VTNH), and 67 to 87 (ALIT…IFWI).

Belongs to the UPF0266 family.

The protein resides in the cell inner membrane. This Escherichia coli O45:K1 (strain S88 / ExPEC) protein is UPF0266 membrane protein YobD.